Consider the following 521-residue polypeptide: 2-isopropylmalate synthase (521 aa).

A Pyruvate carboxyltransferase domain is found at 12–274 (VIIFDTTLRD…WNKIDTTMLT (263 aa)). Mn(2+) contacts are provided by Asp-21, His-209, His-211, and Asn-245. The interval 398 to 521 (KLLSLTVIAG…DLPVPEAAAS (124 aa)) is regulatory domain.

Belongs to the alpha-IPM synthase/homocitrate synthase family. LeuA type 1 subfamily. As to quaternary structure, homodimer. Mn(2+) serves as cofactor.

Its subcellular location is the cytoplasm. The catalysed reaction is 3-methyl-2-oxobutanoate + acetyl-CoA + H2O = (2S)-2-isopropylmalate + CoA + H(+). It functions in the pathway amino-acid biosynthesis; L-leucine biosynthesis; L-leucine from 3-methyl-2-oxobutanoate: step 1/4. Catalyzes the condensation of the acetyl group of acetyl-CoA with 3-methyl-2-oxobutanoate (2-ketoisovalerate) to form 3-carboxy-3-hydroxy-4-methylpentanoate (2-isopropylmalate). The sequence is that of 2-isopropylmalate synthase from Rhodopseudomonas palustris (strain BisB18).